Reading from the N-terminus, the 58-residue chain is Potassium channel toxin alpha-KTx 1.6 (58 aa).

An N-terminal signal peptide occupies residues M1 to A21. Pyrrolidone carboxylic acid is present on Q22. Intrachain disulfides connect C28–C49, C34–C54, and C38–C56.

This sequence belongs to the short scorpion toxin superfamily. Potassium channel inhibitor family. Alpha-KTx 01 subfamily. In terms of tissue distribution, expressed by the venom gland.

The protein resides in the secreted. Potent blocker of both large-conductance calcium-activated potassium channels (KCa1.1/KCNMA1) and voltage-gated potassium channels (Kv1.3/KCNA3 and ERG1/Kv11.1/KCNH2). In Olivierus martensii (Manchurian scorpion), this protein is Potassium channel toxin alpha-KTx 1.6.